Reading from the N-terminus, the 376-residue chain is tRNA-specific 2-thiouridylase MnmA (376 aa).

ATP contacts are provided by residues 9 to 16 and M35; that span reads AMSGGIDS. The Nucleophile role is filled by C105. C105 and C202 are oxidised to a cystine. Residue G129 coordinates ATP. Residues 151–153 form an interaction with tRNA region; the sequence is KDQ. Residue C202 is the Cysteine persulfide intermediate of the active site. Residues 312 to 313 are interaction with tRNA; it reads RY.

This sequence belongs to the MnmA/TRMU family.

It is found in the cytoplasm. The catalysed reaction is S-sulfanyl-L-cysteinyl-[protein] + uridine(34) in tRNA + AH2 + ATP = 2-thiouridine(34) in tRNA + L-cysteinyl-[protein] + A + AMP + diphosphate + H(+). Its function is as follows. Catalyzes the 2-thiolation of uridine at the wobble position (U34) of tRNA, leading to the formation of s(2)U34. The chain is tRNA-specific 2-thiouridylase MnmA from Amoebophilus asiaticus (strain 5a2).